Reading from the N-terminus, the 558-residue chain is NAD(P)H-quinone oxidoreductase chain 4 (558 aa).

14 helical membrane-spanning segments follow: residues 25 to 45 (FPWL…VPFI), 56 to 76 (WYAL…YLKG), 111 to 131 (LILL…PVSF), 133 to 153 (PKLF…VFAV), 157 to 177 (LLFF…LAIW), 189 to 209 (FIIY…AMGF), 230 to 250 (GFQL…LPVV), 264 to 284 (TAPV…YALL), 298 to 318 (FAPL…LTSF), 327 to 347 (IAYS…SFSS), 353 to 373 (AMLQ…LVGA), 395 to 417 (IMFA…SGFV), 438 to 458 (IVIA…LLSM), and 485 to 505 (IYVI…PRIM).

Belongs to the complex I subunit 4 family.

It is found in the cellular thylakoid membrane. It catalyses the reaction a plastoquinone + NADH + (n+1) H(+)(in) = a plastoquinol + NAD(+) + n H(+)(out). It carries out the reaction a plastoquinone + NADPH + (n+1) H(+)(in) = a plastoquinol + NADP(+) + n H(+)(out). In terms of biological role, NDH-1 shuttles electrons from NAD(P)H, via FMN and iron-sulfur (Fe-S) centers, to quinones in the respiratory chain. The immediate electron acceptor for the enzyme in this species is believed to be plastoquinone. Couples the redox reaction to proton translocation (for every two electrons transferred, four hydrogen ions are translocated across the cytoplasmic membrane), and thus conserves the redox energy in a proton gradient. This chain is NAD(P)H-quinone oxidoreductase chain 4, found in Prochlorococcus marinus (strain MIT 9211).